Consider the following 204-residue polypeptide: Putative copper-binding protein (204 aa).

Cu cation-binding residues include Cys-77, Cys-81, and His-166.

It belongs to the SCO1/2 family.

In Stutzerimonas stutzeri (Pseudomonas stutzeri), this protein is Putative copper-binding protein (scoP).